Reading from the N-terminus, the 424-residue chain is Zona pellucida sperm-binding protein 3 (424 aa).

The first 22 residues, 1–22 (MELSYRLFICLLLWGSTELCYP), serve as a signal peptide directing secretion. Residue Gln-23 is modified to Pyrrolidone carboxylic acid. Over 23 to 387 (QPLWLLQGGA…QWALPSDTSV (365 aa)) the chain is Extracellular. In terms of domain architecture, ZP spans 45 to 307 (ECQEATLMVM…KACSFSKPSN (263 aa)). 2 disulfide bridges follow: Cys-46/Cys-140 and Cys-78/Cys-99. Asn-125 and Asn-147 each carry an N-linked (GlcNAc...) asparagine glycan. 3 O-linked (GalNAc...) threonine glycosylation sites follow: Thr-156, Thr-162, and Thr-163. Intrachain disulfides connect Cys-217–Cys-282 and Cys-239–Cys-300. N-linked (GlcNAc...) asparagine glycosylation occurs at Asn-272. Residues 330–356 (PSHSRRQPHVMSQWSRSASRNRRHVTE) form a disordered region. The propeptide at 351-424 (RRHVTEEADV…TASHPVSASE (74 aa)) is removed in mature form. A helical transmembrane segment spans residues 388 to 408 (VLLGVGLAVVVSLTLTAVILV). The Cytoplasmic portion of the chain corresponds to 409–424 (LTRRCRTASHPVSASE).

The protein belongs to the ZP domain family. ZPC subfamily. As to quaternary structure, polymers of ZP2 and ZP3 organized into long filaments cross-linked by ZP1 homodimers. Interacts with ZP1 and ZP2. In terms of processing, proteolytically cleaved before the transmembrane segment to yield the secreted ectodomain incorporated in the zona pellucida. N-glycosylated. Post-translationally, O-glycosylated; removal of O-linked glycans may play an important role in the post-fertilization block to polyspermy. In terms of tissue distribution, expressed in oocytes (at protein level).

The protein resides in the zona pellucida. It localises to the cell membrane. In terms of biological role, component of the zona pellucida, an extracellular matrix surrounding oocytes which mediates sperm binding, induction of the acrosome reaction and prevents post-fertilization polyspermy. The zona pellucida is composed of 3 to 4 glycoproteins, ZP1, ZP2, ZP3, and ZP4. ZP3 is essential for sperm binding and zona matrix formation. The protein is Zona pellucida sperm-binding protein 3 (ZP3) of Homo sapiens (Human).